The chain runs to 81 residues: Sec-independent protein translocase protein TatA (81 aa).

A helical transmembrane segment spans residues 1-21; it reads MGGISVWQLLIIAVIVVLLFG. The interval 42–81 is disordered; it reads AMSDEDSAKNEKDADFEPKSLEKQQQKEAAPETKKDKEQA.

Belongs to the TatA/E family. As to quaternary structure, the Tat system comprises two distinct complexes: a TatABC complex, containing multiple copies of TatA, TatB and TatC subunits, and a separate TatA complex, containing only TatA subunits. Substrates initially bind to the TatABC complex, which probably triggers association of the separate TatA complex to form the active translocon.

The protein localises to the cell inner membrane. Its function is as follows. Part of the twin-arginine translocation (Tat) system that transports large folded proteins containing a characteristic twin-arginine motif in their signal peptide across membranes. TatA could form the protein-conducting channel of the Tat system. The polypeptide is Sec-independent protein translocase protein TatA (Vibrio parahaemolyticus serotype O3:K6 (strain RIMD 2210633)).